The chain runs to 36 residues: Egg-laying hormone (36 aa).

K36 is modified (lysine amide).

This sequence belongs to the molluscan ELH family. As to expression, bag cell neurons.

It is found in the secreted. Its function is as follows. ELH acts as a neurotransmitter locally, upon neurons of the abdominal ganglion and as a hormone by diffusing into the circulating hemolymph and modulating the activity of other organs. It specifically causes contraction of smooth muscle in the ovotestis and expulsion of the egg string. The chain is Egg-laying hormone from Aplysia fasciata (Mottled sea hare).